Here is a 413-residue protein sequence, read N- to C-terminus: Serine hydroxymethyltransferase (413 aa).

Residues Leu-117 and 121–123 (GHL) contribute to the (6S)-5,6,7,8-tetrahydrofolate site. Lys-226 is subject to N6-(pyridoxal phosphate)lysine. (6S)-5,6,7,8-tetrahydrofolate contacts are provided by residues Glu-239 and 349–351 (SPF).

It belongs to the SHMT family. Homodimer. It depends on pyridoxal 5'-phosphate as a cofactor.

The protein resides in the cytoplasm. The catalysed reaction is (6R)-5,10-methylene-5,6,7,8-tetrahydrofolate + glycine + H2O = (6S)-5,6,7,8-tetrahydrofolate + L-serine. Its pathway is one-carbon metabolism; tetrahydrofolate interconversion. It participates in amino-acid biosynthesis; glycine biosynthesis; glycine from L-serine: step 1/1. Functionally, catalyzes the reversible interconversion of serine and glycine with tetrahydrofolate (THF) serving as the one-carbon carrier. This reaction serves as the major source of one-carbon groups required for the biosynthesis of purines, thymidylate, methionine, and other important biomolecules. Also exhibits THF-independent aldolase activity toward beta-hydroxyamino acids, producing glycine and aldehydes, via a retro-aldol mechanism. This Bacillus mycoides (strain KBAB4) (Bacillus weihenstephanensis) protein is Serine hydroxymethyltransferase.